A 171-amino-acid chain; its full sequence is UPF0303 protein YPN_2129 (171 aa).

Belongs to the UPF0303 family.

This Yersinia pestis bv. Antiqua (strain Nepal516) protein is UPF0303 protein YPN_2129.